The primary structure comprises 170 residues: Large ribosomal subunit protein bL9 (170 aa).

The tract at residues 149–170 (RTEEADAEESAAEEPAVEEAAE) is disordered. Residues 153–170 (ADAEESAAEEPAVEEAAE) show a composition bias toward acidic residues.

The protein belongs to the bacterial ribosomal protein bL9 family.

In terms of biological role, binds to the 23S rRNA. The polypeptide is Large ribosomal subunit protein bL9 (Oleidesulfovibrio alaskensis (strain ATCC BAA-1058 / DSM 17464 / G20) (Desulfovibrio alaskensis)).